Here is a 124-residue protein sequence, read N- to C-terminus: PEP-dependent dihydroxyacetone kinase 1, phosphoryl donor subunit DhaM (124 aa).

One can recognise a PTS EIIA type-4 domain in the interval 4-124; the sequence is PYGVVIISHS…AANLKTIEIK (121 aa). His-12 acts as the Tele-phosphohistidine intermediate in catalysis.

It belongs to the PEP-utilizing enzyme family. In terms of assembly, homodimer. The dihydroxyacetone kinase complex is composed of a homodimer of DhaM, a homodimer of DhaK and the subunit DhaL.

Its subcellular location is the cytoplasm. The catalysed reaction is dihydroxyacetone + phosphoenolpyruvate = dihydroxyacetone phosphate + pyruvate. In terms of biological role, component of the dihydroxyacetone kinase complex, which is responsible for the phosphoenolpyruvate (PEP)-dependent phosphorylation of dihydroxyacetone. DhaM serves as the phosphoryl donor. Is phosphorylated by phosphoenolpyruvate in an EI- and HPr-dependent reaction, and a phosphorelay system on histidine residues finally leads to phosphoryl transfer to DhaL and dihydroxyacetone. This chain is PEP-dependent dihydroxyacetone kinase 1, phosphoryl donor subunit DhaM, found in Listeria innocua serovar 6a (strain ATCC BAA-680 / CLIP 11262).